We begin with the raw amino-acid sequence, 166 residues long: NAD(P)H-quinone oxidoreductase subunit I, chloroplastic (166 aa).

4Fe-4S ferredoxin-type domains are found at residues 55–84 (GRIHFEFDKCIACEVCVRVCPIDLPVVDWK) and 95–124 (LNYSIDFGICIFCGNCVEYCPTNCLSMTEE). Residues Cys-64, Cys-67, Cys-70, Cys-74, Cys-104, Cys-107, Cys-110, and Cys-114 each contribute to the [4Fe-4S] cluster site.

Belongs to the complex I 23 kDa subunit family. NDH is composed of at least 16 different subunits, 5 of which are encoded in the nucleus. [4Fe-4S] cluster is required as a cofactor.

It localises to the plastid. The protein resides in the chloroplast thylakoid membrane. The catalysed reaction is a plastoquinone + NADH + (n+1) H(+)(in) = a plastoquinol + NAD(+) + n H(+)(out). It catalyses the reaction a plastoquinone + NADPH + (n+1) H(+)(in) = a plastoquinol + NADP(+) + n H(+)(out). Its function is as follows. NDH shuttles electrons from NAD(P)H:plastoquinone, via FMN and iron-sulfur (Fe-S) centers, to quinones in the photosynthetic chain and possibly in a chloroplast respiratory chain. The immediate electron acceptor for the enzyme in this species is believed to be plastoquinone. Couples the redox reaction to proton translocation, and thus conserves the redox energy in a proton gradient. The polypeptide is NAD(P)H-quinone oxidoreductase subunit I, chloroplastic (Chamaechaenactis scaposa (Fullstem)).